The sequence spans 99 residues: NADH-quinone oxidoreductase subunit K (99 aa).

3 helical membrane passes run 2 to 22 (PVEY…LGVL), 28 to 48 (LILM…FLAF), and 60 to 80 (IAFF…AVVI).

The protein belongs to the complex I subunit 4L family. In terms of assembly, NDH-1 is composed of 14 different subunits. Subunits NuoA, H, J, K, L, M, N constitute the membrane sector of the complex.

It localises to the cell inner membrane. It catalyses the reaction a quinone + NADH + 5 H(+)(in) = a quinol + NAD(+) + 4 H(+)(out). NDH-1 shuttles electrons from NADH, via FMN and iron-sulfur (Fe-S) centers, to quinones in the respiratory chain. The immediate electron acceptor for the enzyme in this species is believed to be ubiquinone. Couples the redox reaction to proton translocation (for every two electrons transferred, four hydrogen ions are translocated across the cytoplasmic membrane), and thus conserves the redox energy in a proton gradient. The protein is NADH-quinone oxidoreductase subunit K of Anaeromyxobacter dehalogenans (strain 2CP-C).